The following is a 681-amino-acid chain: Pentatricopeptide repeat-containing protein At2g22410, mitochondrial (681 aa).

A mitochondrion-targeting transit peptide spans methionine 1–arginine 32. 13 PPR repeats span residues asparagine 117–glutamate 151, aspartate 155–leucine 189, valine 190–arginine 220, aspartate 221–proline 255, aspartate 256–methionine 290, threonine 291–arginine 321, threonine 322–leucine 356, tryptophan 357–proline 387, aspartate 388–leucine 422, asparagine 423–arginine 453, asparagine 454–proline 488, aspartate 489–arginine 519, and glutamine 525–glutamate 555. Positions valine 560–asparagine 635 are type E motif. The tract at residues glycine 636–arginine 666 is type E(+) motif.

This sequence belongs to the PPR family. PCMP-E subfamily.

It localises to the mitochondrion. In Arabidopsis thaliana (Mouse-ear cress), this protein is Pentatricopeptide repeat-containing protein At2g22410, mitochondrial (PCMP-E28).